We begin with the raw amino-acid sequence, 75 residues long: Probable pilin MJ1469 (75 aa).

A propeptide spanning residues 1–11 (MKPKKIISNKA) is cleaved from the precursor. The QXSXEXXXL signature appears at 12–20 (QISLELALL).

Post-translationally, the N-terminus is cleaved by the prepilin peptidase EppA, which recognizes the class III signal sequence.

The protein resides in the secreted. It localises to the cell surface. The protein localises to the fimbrium. The sequence is that of Probable pilin MJ1469 from Methanocaldococcus jannaschii (strain ATCC 43067 / DSM 2661 / JAL-1 / JCM 10045 / NBRC 100440) (Methanococcus jannaschii).